A 251-amino-acid chain; its full sequence is MISYEYPLSERIRTLLRLEDLFRKVAHFGGSEAPLDHHVALLTIFEILEVASRADLKVDLVQELERQRQILLSFRNNPEISEEALAGALYEIEQASTALLSMAGKIGQYLRENEWLMGIRSRAAIPGGVCQFDLPSYHFWLNRDAAERRHDLDAWIMPMTPIRDGIEIVMRLLRSSGRPEQQRARAGTYQLTMAGRVAQMLRVRIPRSEAVVPEISANKYALNIRFMLPETVARPRVAEREITFELTFCTL.

It belongs to the ZapD family. In terms of assembly, interacts with FtsZ.

Its subcellular location is the cytoplasm. Cell division factor that enhances FtsZ-ring assembly. Directly interacts with FtsZ and promotes bundling of FtsZ protofilaments, with a reduction in FtsZ GTPase activity. The polypeptide is Cell division protein ZapD (Azoarcus sp. (strain BH72)).